The following is a 430-amino-acid chain: Serine--tRNA ligase (430 aa).

Positions 103–127 (LPNIPDDDVPDGRDENDNQEVSRWG) are disordered. 237–239 (TAE) provides a ligand contact to L-serine. ATP is bound at residue 268–270 (RSE). L-serine is bound at residue Glu291. Residue 355 to 358 (EISS) participates in ATP binding. Residue Ser391 coordinates L-serine.

The protein belongs to the class-II aminoacyl-tRNA synthetase family. Type-1 seryl-tRNA synthetase subfamily. As to quaternary structure, homodimer. The tRNA molecule binds across the dimer.

Its subcellular location is the cytoplasm. The enzyme catalyses tRNA(Ser) + L-serine + ATP = L-seryl-tRNA(Ser) + AMP + diphosphate + H(+). It catalyses the reaction tRNA(Sec) + L-serine + ATP = L-seryl-tRNA(Sec) + AMP + diphosphate + H(+). It functions in the pathway aminoacyl-tRNA biosynthesis; selenocysteinyl-tRNA(Sec) biosynthesis; L-seryl-tRNA(Sec) from L-serine and tRNA(Sec): step 1/1. In terms of biological role, catalyzes the attachment of serine to tRNA(Ser). Is also able to aminoacylate tRNA(Sec) with serine, to form the misacylated tRNA L-seryl-tRNA(Sec), which will be further converted into selenocysteinyl-tRNA(Sec). The sequence is that of Serine--tRNA ligase from Sodalis glossinidius (strain morsitans).